A 113-amino-acid chain; its full sequence is UPF0339 protein MS1092 (113 aa).

2 tandem repeats follow at residues 11–59 and 62–110.

The protein belongs to the UPF0339 family. Duplicated subfamily.

This chain is UPF0339 protein MS1092, found in Mannheimia succiniciproducens (strain KCTC 0769BP / MBEL55E).